The following is a 434-amino-acid chain: MITSRAFAGRRYAVLGLARSGLATVEALVASGAGVTAWDDREEARDAAMALGADIGNPLDIDLIGFAGVVVSPGVPLNRHPIAAHARDAHVPVIGDIELFAEARSELPPHKVVGITGTNGKSTVTALIAHMLESAGVPVLMGGNIGLPILTREPLPEAGVYVLELSSFQIDLAHSLACDVAVLTNISPDHLDRYDGFEGYVASKARLFSLQHRDQVAIIATDDDPSKMIASRVNHRLHRVSAKDIDPVDQARWPALQGPHNAQNAVCAIAACRVLGLDDEAIERGLATFRSLPHRMELVGEARGARWYNDSKATNAASAAPALAAFPPAPDQRLHWIAGGQAKGDGLAACRPWFGHVKRAYLIGEAMAPFAAEIGDAIAIERSGDLASAVAQAAAAVQPGDIVLLSPACASFDQFKDYEARGEAFRAAVEALGA.

117-123 (GTNGKST) is a binding site for ATP.

Belongs to the MurCDEF family.

The protein resides in the cytoplasm. It carries out the reaction UDP-N-acetyl-alpha-D-muramoyl-L-alanine + D-glutamate + ATP = UDP-N-acetyl-alpha-D-muramoyl-L-alanyl-D-glutamate + ADP + phosphate + H(+). The protein operates within cell wall biogenesis; peptidoglycan biosynthesis. Cell wall formation. Catalyzes the addition of glutamate to the nucleotide precursor UDP-N-acetylmuramoyl-L-alanine (UMA). The chain is UDP-N-acetylmuramoylalanine--D-glutamate ligase from Sphingopyxis alaskensis (strain DSM 13593 / LMG 18877 / RB2256) (Sphingomonas alaskensis).